Reading from the N-terminus, the 461-residue chain is Pancreatic triacylglycerol lipase (461 aa).

Residues 1-12 form the signal peptide; the sequence is WTLSLLLGAVVG. 2 disulfides stabilise this stretch: Cys16–Cys22 and Cys103–Cys114. Ser165 (nucleophile) is an active-site residue. Asp189 functions as the Charge relay system in the catalytic mechanism. Ca(2+)-binding residues include Glu200, Arg203, Asp205, and Asp208. A disulfide bridge links Cys250 with Cys274. His276 acts as the Charge relay system in catalysis. 3 cysteine pairs are disulfide-bonded: Cys298–Cys309, Cys312–Cys317, and Cys445–Cys461. The 111-residue stretch at 351 to 461 folds into the PLAT domain; that stretch reads WRYRVDVTLS…EDVLLTLTAC (111 aa).

The protein belongs to the AB hydrolase superfamily. Lipase family. Forms a 1:1 stoichiometric complex with (pro)colipase/CLPS.

The protein localises to the secreted. It catalyses the reaction a triacylglycerol + H2O = a diacylglycerol + a fatty acid + H(+). The catalysed reaction is 1,2,3-tributanoylglycerol + H2O = dibutanoylglycerol + butanoate + H(+). It carries out the reaction 1,2,3-tri-(9Z-octadecenoyl)-glycerol + H2O = di-(9Z)-octadecenoylglycerol + (9Z)-octadecenoate + H(+). The enzyme catalyses all-trans-retinyl hexadecanoate + H2O = all-trans-retinol + hexadecanoate + H(+). It catalyses the reaction 1,2-di-(9Z-octadecenoyl)-glycerol + H2O = (9Z-octadecenoyl)-glycerol + (9Z)-octadecenoate + H(+). Inhibited by bile salts, is reactivated by (pro)colipase/CLPS. Plays an important role in fat metabolism. It preferentially splits the esters of long-chain fatty acids at positions 1 and 3, producing mainly 2-monoacylglycerol and free fatty acids, and shows considerably higher activity against insoluble emulsified substrates than against soluble ones. The protein is Pancreatic triacylglycerol lipase (PNLIP) of Equus caballus (Horse).